Consider the following 444-residue polypeptide: UDP-N-acetylmuramate--L-alanine ligase (444 aa).

Residue 110–116 participates in ATP binding; that stretch reads GAHGKTS.

The protein belongs to the MurCDEF family.

Its subcellular location is the cytoplasm. The enzyme catalyses UDP-N-acetyl-alpha-D-muramate + L-alanine + ATP = UDP-N-acetyl-alpha-D-muramoyl-L-alanine + ADP + phosphate + H(+). It functions in the pathway cell wall biogenesis; peptidoglycan biosynthesis. Its function is as follows. Cell wall formation. The polypeptide is UDP-N-acetylmuramate--L-alanine ligase (Streptococcus pneumoniae (strain JJA)).